Here is a 168-residue protein sequence, read N- to C-terminus: G/U mismatch-specific DNA glycosylase (168 aa).

The protein belongs to the uracil-DNA glycosylase (UDG) superfamily. TDG/mug family. In terms of assembly, binds DNA as a monomer.

The protein resides in the cytoplasm. The enzyme catalyses Specifically hydrolyzes mismatched double-stranded DNA and polynucleotides, releasing free uracil.. In terms of biological role, excises ethenocytosine and uracil, which can arise by alkylation or deamination of cytosine, respectively, from the corresponding mispairs with guanine in ds-DNA. It is capable of hydrolyzing the carbon-nitrogen bond between the sugar-phosphate backbone of the DNA and the mispaired base. The complementary strand guanine functions in substrate recognition. Required for DNA damage lesion repair in stationary-phase cells. This chain is G/U mismatch-specific DNA glycosylase, found in Escherichia coli O139:H28 (strain E24377A / ETEC).